Consider the following 591-residue polypeptide: L-fucose isomerase (591 aa).

Active-site proton acceptor residues include E337 and D361. Positions 337, 361, and 528 each coordinate Mn(2+).

This sequence belongs to the L-fucose isomerase family. In terms of assembly, homohexamer. Requires Mn(2+) as cofactor.

It localises to the cytoplasm. It carries out the reaction L-fucose = L-fuculose. It functions in the pathway carbohydrate degradation; L-fucose degradation; L-lactaldehyde and glycerone phosphate from L-fucose: step 1/3. Converts the aldose L-fucose into the corresponding ketose L-fuculose. The sequence is that of L-fucose isomerase from Salmonella choleraesuis (strain SC-B67).